We begin with the raw amino-acid sequence, 583 residues long: Radixin (583 aa).

The FERM domain occupies 5-295; it reads INVRVTTMDA…GNHELYMRRR (291 aa). 60–63 contributes to the a 1,2-diacyl-sn-glycero-3-phospho-(1D-myo-inositol) binding site; sequence KLNK. Position 83 is an N6-succinyllysine (lysine 83). Residue lysine 278 participates in a 1,2-diacyl-sn-glycero-3-phospho-(1D-myo-inositol) binding. Disordered stretches follow at residues 310–336, 374–407, and 458–526; these read REEK…AEKE, ELDQ…AKQA, and KTKE…RVNK. Basic and acidic residues predominate over residues 374-400; that stretch reads ELDQERKRAKEEAERLEKERRAAEEAK. Over residues 469–480 the composition is skewed to pro residues; sequence APPPPPPPPVVP. Composition is skewed to basic and acidic residues over residues 483–492 and 506–525; these read ENEHDEHDEN and MNHR…ERVN. Threonine 564 is subject to Phosphothreonine; by ROCK2.

Interacts with CPNE1 (via VWFA domain) and CPNE4 (via VWFA domain). Binds NHERF1. Interacts with NHERF1, NHERF2, LAYN, MME/NEP and ICAM2. Interacts (via FERM domain) with SPN/CD43 cytoplasmic tail. Interacts with CD44. Interacts with CLIC5; may work together in a complex which also includes EZR and MYO6 to stabilize linkages between the plasma membrane and subjacent actin cytoskeleton at the base of stereocilia. Post-translationally, phosphorylated by tyrosine-protein kinases. Phosphorylation by ROCK2 suppresses the head-to-tail association of the N-terminal and C-terminal halves resulting in an opened conformation which is capable of actin and membrane-binding.

The protein localises to the cell membrane. The protein resides in the cytoplasm. Its subcellular location is the cytoskeleton. It localises to the cleavage furrow. It is found in the cell projection. The protein localises to the microvillus. The protein resides in the stereocilium. A head-to-tail association, of the N-terminal and C-terminal halves results in a closed conformation (inactive form) which is incapable of actin or membrane-binding. In terms of biological role, probably plays a crucial role in the binding of the barbed end of actin filaments to the plasma membrane. This Sus scrofa (Pig) protein is Radixin (RDX).